Consider the following 363-residue polypeptide: UDP-3-O-acylglucosamine N-acyltransferase (363 aa).

Catalysis depends on histidine 266, which acts as the Proton acceptor.

It belongs to the transferase hexapeptide repeat family. LpxD subfamily. In terms of assembly, homotrimer.

The catalysed reaction is a UDP-3-O-[(3R)-3-hydroxyacyl]-alpha-D-glucosamine + a (3R)-hydroxyacyl-[ACP] = a UDP-2-N,3-O-bis[(3R)-3-hydroxyacyl]-alpha-D-glucosamine + holo-[ACP] + H(+). It functions in the pathway bacterial outer membrane biogenesis; LPS lipid A biosynthesis. Functionally, catalyzes the N-acylation of UDP-3-O-acylglucosamine using 3-hydroxyacyl-ACP as the acyl donor. Is involved in the biosynthesis of lipid A, a phosphorylated glycolipid that anchors the lipopolysaccharide to the outer membrane of the cell. The sequence is that of UDP-3-O-acylglucosamine N-acyltransferase from Bordetella pertussis (strain Tohama I / ATCC BAA-589 / NCTC 13251).